The following is an 816-amino-acid chain: MAMWQGAMDNRGFHQGSFSSFQSSSSDEDLMDIPGTAMDFSMRDDVPPLDREIEGNKSYNGGGIGSSNRIMDFLEEPIPGVGTYDDFNTIDWVREKSRDRDRHREITNKSKESTWALIHSVSDAFSGWLLMLLIGLLSGSLAGLIDISAHWMTDLKEGICTGGFWFNHEHCCWNSEHVTFEDRDKCPEWNSWSQLIISTDQGAFAYIVNYFMYVLWALLFAFLAVSLVKAFAPYACGSGIPEIKTILSGFIIRGYLGKWTLVIKTITLVLAVSSGLSLGKEGPLVHVACCCGNILCHCFNKYRKNEAKRREVLSAAAAAGVSVAFGAPIGGVLFSLEEVSYYFPLKTLWRSFFAALVAAFTLRSINPFGNSRLVLFYVEFHTPWHLFELVPFIVLGIFGGLWGALFIRTNIAWCRKRKTTQLGKYPVVEVLIVTAITAILAFPNEYTRMSTSELISELFNDCGLLDSSKLCDYENHFNTSKGGELPDRPAGVGVYSAMWQLALTLILKIVITIFTFGMKIPSGLFIPSMAVGAIAGRLLGVGMEQLAYYHHDWGIFNSWCSQGADCITPGLYAMVGAAACLGGVTRMTVSLVVIMFELTGGLEYIVPLMAAAMTSKWVADALGREGIYDAHIRLNGYPFLEAKEEFAHKTLAMDVMKPRRNDPLLTVLTQDSMTVEDVETIISETTYSGFPVVVSRESQRLVGFVLRRDLIISIENARKKQDGVVSTSIIYFTEHSPPMPPYTPPTLKLRNILDLSPFTVTDLTPMEIVVDIFRKLGLRQCLVTHNGRLLGIITKKDVLKHIAQMANQDPESILFN.

The Cytoplasmic portion of the chain corresponds to 1–124; sequence MAMWQGAMDN…WALIHSVSDA (124 aa). Helical transmembrane passes span 125 to 162 and 208 to 231; these read FSGW…ICTG and VNYF…VKAF. The Selectivity filter part_1 motif lies at 237–241; it reads GSGIP. Ser-238 contacts chloride. The helical intramembrane region spans 240 to 247; the sequence is IPEIKTIL. 2 consecutive transmembrane segments (helical) span residues 256–275 and 281–300; these read LGKW…VSSG and EGPL…HCFN. The Selectivity filter part_2 motif lies at 279-283; the sequence is GKEGP. Intramembrane regions (helical) lie at residues 312 to 324 and 328 to 336; these read VLSA…VSVA and PIGGVLFSL. The next 5 membrane-spanning stretches (helical) occupy residues 348–366, 389–414, 422–442, 498–518, and 523–542; these read LWRS…RSIN, LVPF…IAWC, LGKY…ILAF, MWQL…TFGM, and GLFI…LGVG. A Selectivity filter part_3 motif is present at residues 523–527; the sequence is GLFIP. Residue Phe-525 participates in chloride binding. Positions 570–584 form an intramembrane region, helical; it reads GLYAMVGAAACLGGV. The note=Loop between two helices intramembrane region spans 585 to 587; the sequence is TRM. The helical intramembrane region spans 588–599; that stretch reads TVSLVVIMFELT. Residues 600–604 constitute an intramembrane region (note=Loop between two helices); that stretch reads GGLEY. A helical transmembrane segment spans residues 605-622; sequence IVPLMAAAMTSKWVADAL. Residues 623–816 are Cytoplasmic-facing; the sequence is GREGIYDAHI…NQDPESILFN (194 aa). Position 628 (Tyr-628) interacts with chloride. 2 CBS domains span residues 656 to 720 and 752 to 811; these read MKPR…ARKK and ILDL…QDPE. Residues Thr-666, 687-689, and 794-797 each bind ATP; these read YSG and TKKD.

Belongs to the chloride channel (TC 2.A.49) family. ClC-5/CLCN5 subfamily. In terms of assembly, interacts with NEDD4 and NEDD4L. In terms of processing, ubiquitinated by NEDD4L in the presence of albumin; which promotes endocytosis and proteasomal degradation. Kidney specific.

The protein localises to the golgi apparatus membrane. Its subcellular location is the endosome membrane. It localises to the cell membrane. It catalyses the reaction 2 chloride(in) + H(+)(out) = 2 chloride(out) + H(+)(in). Its function is as follows. Proton-coupled chloride transporter. Functions as antiport system and exchanges chloride ions against protons. Important for normal acidification of the endosome lumen. May play an important role in renal tubular function. The CLC channel family contains both chloride channels and proton-coupled anion transporters that exchange chloride or another anion for protons. The absence of conserved gating glutamate residues is typical for family members that function as channels. The polypeptide is H(+)/Cl(-) exchange transporter 5 (Clcn5) (Rattus norvegicus (Rat)).